Here is a 61-residue protein sequence, read N- to C-terminus: Small ribosomal subunit protein uS14 (61 aa).

Residues Cys-24, Cys-27, Cys-40, and Cys-43 each contribute to the Zn(2+) site.

The protein belongs to the universal ribosomal protein uS14 family. Zinc-binding uS14 subfamily. In terms of assembly, part of the 30S ribosomal subunit. Contacts proteins S3 and S10. The cofactor is Zn(2+).

In terms of biological role, binds 16S rRNA, required for the assembly of 30S particles and may also be responsible for determining the conformation of the 16S rRNA at the A site. In Natranaerobius thermophilus (strain ATCC BAA-1301 / DSM 18059 / JW/NM-WN-LF), this protein is Small ribosomal subunit protein uS14.